A 219-amino-acid polypeptide reads, in one-letter code: Ribose-5-phosphate isomerase A (219 aa).

Substrate is bound by residues 28–31 (TGST), 81–84 (DGAD), and 94–97 (KGGG). The Proton acceptor role is filled by glutamate 103. A substrate-binding site is contributed by lysine 121.

The protein belongs to the ribose 5-phosphate isomerase family. Homodimer.

It carries out the reaction aldehydo-D-ribose 5-phosphate = D-ribulose 5-phosphate. It functions in the pathway carbohydrate degradation; pentose phosphate pathway; D-ribose 5-phosphate from D-ribulose 5-phosphate (non-oxidative stage): step 1/1. Its function is as follows. Catalyzes the reversible conversion of ribose-5-phosphate to ribulose 5-phosphate. The chain is Ribose-5-phosphate isomerase A from Shigella boydii serotype 18 (strain CDC 3083-94 / BS512).